The following is a 250-amino-acid chain: Flavin-dependent thymidylate synthase (250 aa).

The ThyX domain occupies 7 to 233; it reads LRVQLIAKTD…PAVFADFEIA (227 aa). Residues serine 71, 95–97, and glutamine 103 each bind FAD; that span reads RHR. DUMP contacts are provided by residues 92 to 95, 103 to 107, and arginine 172; these read ELIR and QLSQR. Residues 95 to 105 carry the ThyX motif motif; sequence RHRHFSYSQLS. FAD contacts are provided by residues 188 to 190 and histidine 194; that span reads NYR. Arginine 199 provides a ligand contact to dUMP. Residue arginine 199 is the Involved in ionization of N3 of dUMP, leading to its activation of the active site.

This sequence belongs to the thymidylate synthase ThyX family. Homotetramer. FAD is required as a cofactor.

The catalysed reaction is dUMP + (6R)-5,10-methylene-5,6,7,8-tetrahydrofolate + NADPH + H(+) = dTMP + (6S)-5,6,7,8-tetrahydrofolate + NADP(+). It participates in pyrimidine metabolism; dTTP biosynthesis. Its function is as follows. Catalyzes the reductive methylation of 2'-deoxyuridine-5'-monophosphate (dUMP) to 2'-deoxythymidine-5'-monophosphate (dTMP) while utilizing 5,10-methylenetetrahydrofolate (mTHF) as the methyl donor, and NADPH and FADH(2) as the reductant. This Mycobacterium avium (strain 104) protein is Flavin-dependent thymidylate synthase.